Here is a 5087-residue protein sequence, read N- to C-terminus: Nonribosomal peptide synthetase sidC (5087 aa).

Residues 165-563 form an adenylation 1 region; that stretch reads HEMVRHTGNE…NGELQCMGRI (399 aa). The region spanning 671 to 744 is the Carrier 1 domain; that stretch reads EPAGDIEQKI…KMAALVLKSQ (74 aa). Residue serine 705 is modified to O-(pantetheine 4'-phosphoryl)serine. Positions 782–1112 are condensation 1; it reads DIIPCSPIQT…LFDTLFVWQD (331 aa). An adenylation 2 region spans residues 1217-1611; the sequence is ELAKTDSERI…GRRDDLVKIR (395 aa). One can recognise a Carrier 2 domain in the interval 1740-1817; sequence ENLTDNEAKV…RLTRKISQSI (78 aa). Serine 1777 is subject to O-(pantetheine 4'-phosphoryl)serine. Residues 1855-2272 form a condensation 2 region; sequence KILPCTSLQE…RVMDFSLVES (418 aa). In terms of domain architecture, Carrier 3 spans 2302–2378; that stretch reads EEWSAESLEI…EIASVLQGSK (77 aa). Serine 2339 bears the O-(pantetheine 4'-phosphoryl)serine mark. The tract at residues 2419–2831 is condensation 3; that stretch reads PCTTPQAGML…STSSSLDTAS (413 aa). Residues 2860–3258 are adenylation 3; the sequence is ATRHPSRVAL…GRIDDQVKLR (399 aa). One can recognise a Carrier 4 domain in the interval 3387 to 3464; that stretch reads TEDTDTIRKI…LLAKAVESPD (78 aa). Residue serine 3424 is modified to O-(pantetheine 4'-phosphoryl)serine. Residues 3506–3910 are condensation 4; that stretch reads ITPCTSLQDG…RSLVEEPFSN (405 aa). Residues 3943–4019 enclose the Carrier 5 domain; the sequence is FQWSQAASLL…TMMAEVTVNG (77 aa). The residue at position 3980 (serine 3980) is an O-(pantetheine 4'-phosphoryl)serine. The segment at 4051-4416 is condensation 5; sequence EHIYPATPLQ…EYSICVELEA (366 aa). One can recognise a Carrier 6 domain in the interval 4496-4569; it reads SLLEERIRDT…KMAEIVNSAR (74 aa). Serine 4530 carries the post-translational modification O-(pantetheine 4'-phosphoryl)serine. Residues 4610-4913 form a condensation 6 region; the sequence is FLPATAGQVY…IQSDLHEIGS (304 aa). Positions 5013 to 5048 are disordered; the sequence is DVYKVSPPGSQLSQDSPEKQEANNKPSPQPSVDIEA.

This sequence belongs to the NRP synthetase family.

It participates in siderophore biosynthesis. Its function is as follows. Nonribosomal peptide synthetase; part of the siderophore biosynthetic pathway. Arthroderma benhamiae produces 2 types of extracellular siderophores, ferrichrome C and ferricrocin. The biosynthesis of these siderophores depends on the hydroxylation of ornithine to N(5)-hydroxyornithine, catalyzed by the monooxygenase sidA. The structure of ferricrocin differs from ferrichrome C only by a serine for alanine substitution and the assembly of both siderophores is suggested to be performed by the nonribosomal peptide synthase (NRPS) sidC. In Arthroderma benhamiae (strain ATCC MYA-4681 / CBS 112371) (Trichophyton mentagrophytes), this protein is Nonribosomal peptide synthetase sidC.